The chain runs to 216 residues: Cytochrome c biogenesis ATP-binding export protein CcmA (216 aa).

The region spanning 11 to 216 (VSASKLTCIR…RKIRLDYRFV (206 aa)) is the ABC transporter domain. 43–50 (GPNGAGKT) is a binding site for ATP.

It belongs to the ABC transporter superfamily. CcmA exporter (TC 3.A.1.107) family. In terms of assembly, the complex is composed of two ATP-binding proteins (CcmA) and two transmembrane proteins (CcmB).

It localises to the cell inner membrane. It catalyses the reaction heme b(in) + ATP + H2O = heme b(out) + ADP + phosphate + H(+). Functionally, part of the ABC transporter complex CcmAB involved in the biogenesis of c-type cytochromes; once thought to export heme, this seems not to be the case, but its exact role is uncertain. Responsible for energy coupling to the transport system. The sequence is that of Cytochrome c biogenesis ATP-binding export protein CcmA from Shewanella sp. (strain MR-4).